Here is a 164-residue protein sequence, read N- to C-terminus: Peptide deformylase (164 aa).

Fe cation-binding residues include Cys-87 and His-129. Glu-130 is an active-site residue. His-133 contributes to the Fe cation binding site.

Belongs to the polypeptide deformylase family. The cofactor is Fe(2+).

It catalyses the reaction N-terminal N-formyl-L-methionyl-[peptide] + H2O = N-terminal L-methionyl-[peptide] + formate. Removes the formyl group from the N-terminal Met of newly synthesized proteins. Requires at least a dipeptide for an efficient rate of reaction. N-terminal L-methionine is a prerequisite for activity but the enzyme has broad specificity at other positions. This Thermotoga maritima (strain ATCC 43589 / DSM 3109 / JCM 10099 / NBRC 100826 / MSB8) protein is Peptide deformylase.